A 191-amino-acid polypeptide reads, in one-letter code: Glycerol-3-phosphate acyltransferase (191 aa).

5 consecutive transmembrane segments (helical) span residues Tyr-3 to Thr-23, Thr-51 to Val-71, Tyr-78 to Phe-98, Val-108 to Val-128, and Tyr-150 to Phe-170.

This sequence belongs to the PlsY family. Probably interacts with PlsX.

It is found in the cell inner membrane. It carries out the reaction an acyl phosphate + sn-glycerol 3-phosphate = a 1-acyl-sn-glycero-3-phosphate + phosphate. It participates in lipid metabolism; phospholipid metabolism. Functionally, catalyzes the transfer of an acyl group from acyl-phosphate (acyl-PO(4)) to glycerol-3-phosphate (G3P) to form lysophosphatidic acid (LPA). This enzyme utilizes acyl-phosphate as fatty acyl donor, but not acyl-CoA or acyl-ACP. This Pelagibacter ubique (strain HTCC1062) protein is Glycerol-3-phosphate acyltransferase.